A 593-amino-acid chain; its full sequence is MKSMASPSSQIWVILGLGLAGIYVLTRKLTQAVKEDFGAFLLKLKLLPPPPPAPPKAPHPLSSLNFAISDIFDIEGHVSTFGHPEWARTHEPASSTASAVSALVESGATCIGTTVVDELAYGISGENKHFGTPTNPAVPNRVPGGSSSGAAVAVAANFVDFSLGVDTSGGVRVPAGFCGILGFRPSHGAVSHVGIIPVSTSLDTVGWFAKDPDVLRRVGHILLQAPFVMQRNPRQIIIADDCFQHLNVPLDRTSQVVIKATEKLFGKQVLKHINFEDYISSKVSSLKACSIQKSNGVLKSSSLKLLANVMQSLQRHEFEHTHSEWMSIVKPDLHPAVSAQLHEKFEVSELEIENSKSVRSELRVAVNSLLKDEGVLVIPTVADPPPKLGGKEFLSHDYQSRALSLLSIASISGCCQVTVPLGFFDKNPVSVSLIARHGGDRFLLDTLKTMYTVLQEQADIAAPSKSSKSVVSKEQSAEISKEKGNQAYKDKQWQKAIGFYTEAIKLCGNNATYYSNRAQAYLELGSYLQAEEDCTTAISFDKKNVKAYFRRGTAREMLGYYKEAIDDFKYALVLEPTNKRAASSAERLRKLFQ.

The Chloroplast intermembrane segment spans residues 1 to 4 (MKSM). Residues 5–25 (ASPSSQIWVILGLGLAGIYVL) traverse the membrane as a helical segment. Over 26–144 (TRKLTQAVKE…NPAVPNRVPG (119 aa)) the chain is Cytoplasmic. The chain crosses the membrane as a helical span at residues 145 to 165 (GSSSGAAVAVAANFVDFSLGV). At 166-403 (DTSGGVRVPA…LSHDYQSRAL (238 aa)) the chain is on the chloroplast intermembrane side. The helical transmembrane segment at 404 to 424 (SLLSIASISGCCQVTVPLGFF) threads the bilayer. At 425-593 (DKNPVSVSLI…SAERLRKLFQ (169 aa)) the chain is on the cytoplasmic side. 3 TPR repeats span residues 477–510 (AEIS…CGNN), 511–544 (ATYY…DKKN), and 545–578 (VKAY…EPTN).

As to quaternary structure, part of the Toc complex and of the intermembrane space complex. Interacts with TOC12, TIC22 and with the cytosolic domain of TOC34 in a GTP dependent manner. Interacts (via TPR region) with HSP90 and with HSP70 with low efficiency.

The protein resides in the plastid. Its subcellular location is the chloroplast outer membrane. Chaperone receptor mediating Hsp90-dependent protein targeting to chloroplasts. Bi-functional preprotein receptor acting on both sides of the membrane. The polypeptide is Translocon at the outer membrane of chloroplasts 64 (TOC64) (Pisum sativum (Garden pea)).